The primary structure comprises 86 residues: Putative membrane protein insertion efficiency factor (86 aa).

Belongs to the UPF0161 family.

It is found in the cell inner membrane. In terms of biological role, could be involved in insertion of integral membrane proteins into the membrane. The chain is Putative membrane protein insertion efficiency factor from Haemophilus influenzae (strain 86-028NP).